The chain runs to 160 residues: S-ribosylhomocysteine lyase (160 aa).

3 residues coordinate Fe cation: His57, His61, and Cys127.

This sequence belongs to the LuxS family. Homodimer. Fe cation serves as cofactor.

The catalysed reaction is S-(5-deoxy-D-ribos-5-yl)-L-homocysteine = (S)-4,5-dihydroxypentane-2,3-dione + L-homocysteine. Functionally, involved in the synthesis of autoinducer 2 (AI-2) which is secreted by bacteria and is used to communicate both the cell density and the metabolic potential of the environment. The regulation of gene expression in response to changes in cell density is called quorum sensing. Catalyzes the transformation of S-ribosylhomocysteine (RHC) to homocysteine (HC) and 4,5-dihydroxy-2,3-pentadione (DPD). The polypeptide is S-ribosylhomocysteine lyase (Streptococcus mutans serotype c (strain ATCC 700610 / UA159)).